The following is a 245-amino-acid chain: Probable transcriptional regulatory protein TP_0474 (245 aa).

It belongs to the TACO1 family.

The protein localises to the cytoplasm. This Treponema pallidum (strain Nichols) protein is Probable transcriptional regulatory protein TP_0474.